Consider the following 556-residue polypeptide: 2-succinyl-5-enolpyruvyl-6-hydroxy-3-cyclohexene-1-carboxylate synthase (556 aa).

Belongs to the TPP enzyme family. MenD subfamily. Homodimer. The cofactor is Mg(2+). Requires Mn(2+) as cofactor. Thiamine diphosphate serves as cofactor.

The enzyme catalyses isochorismate + 2-oxoglutarate + H(+) = 5-enolpyruvoyl-6-hydroxy-2-succinyl-cyclohex-3-ene-1-carboxylate + CO2. The protein operates within quinol/quinone metabolism; 1,4-dihydroxy-2-naphthoate biosynthesis; 1,4-dihydroxy-2-naphthoate from chorismate: step 2/7. It participates in quinol/quinone metabolism; menaquinone biosynthesis. In terms of biological role, catalyzes the thiamine diphosphate-dependent decarboxylation of 2-oxoglutarate and the subsequent addition of the resulting succinic semialdehyde-thiamine pyrophosphate anion to isochorismate to yield 2-succinyl-5-enolpyruvyl-6-hydroxy-3-cyclohexene-1-carboxylate (SEPHCHC). This is 2-succinyl-5-enolpyruvyl-6-hydroxy-3-cyclohexene-1-carboxylate synthase from Staphylococcus epidermidis (strain ATCC 35984 / DSM 28319 / BCRC 17069 / CCUG 31568 / BM 3577 / RP62A).